The chain runs to 417 residues: Serine/threonine-protein phosphatase 4 regulatory subunit 2 (417 aa).

Composition is skewed to polar residues over residues 140–149 (EKNNSNSLNR), 158–170 (NSPS…NING), and 186–196 (APMTTNGLPES). A disordered region spans residues 140-417 (EKNNSNSLNR…EVTDEPMEQD (278 aa)). Residue serine 159 is modified to Phosphoserine. Residues 197–213 (TDSKEANLQQNEEKNHS) are compositionally biased toward basic and acidic residues. The span at 214–226 (DSSTSESEVSSVS) shows a compositional bias: low complexity. At serine 226 the chain carries Phosphoserine. A compositionally biased stretch (basic and acidic residues) spans 231 to 258 (KHPDEDAVEAEGHEVKRLRFDKEGEVRE). The segment covering 259-269 (TASQTTSSEIS) has biased composition (polar residues). A compositionally biased stretch (basic and acidic residues) spans 283–297 (QDKDKDSRCTRQHCT). The span at 298–311 (EEDEEEDEEEEEES) shows a compositional bias: acidic residues. Over residues 318-327 (MIPERKNQEK) the composition is skewed to basic and acidic residues. The span at 338–350 (ETSEENNQMEESD) shows a compositional bias: acidic residues. Over residues 353 to 363 (QAEKDLLHSEG) the composition is skewed to basic and acidic residues. The segment covering 366 to 375 (NEGPVSSSSS) has biased composition (low complexity). The span at 385-399 (GSNSSKTGEILSESS) shows a compositional bias: polar residues. Over residues 400-417 (MENDDEATEVTDEPMEQD) the composition is skewed to acidic residues.

Belongs to the PPP4R2 family. As to quaternary structure, serine/threonine-protein phosphatase 4 (PP4) occurs in different assemblies of the catalytic and one or more regulatory subunits. Component of the PP4 complexes PPP4C-PPP4R2, PPP4C-PPP4R2-PPP4R3A and PPP4C-PPP4R2-PPP4R3B. The PPP4C-PPP4R2 complex appears to be a tetramer composed of 2 molecules of PPP4C and 2 molecules of PPP4R2. Interacts with DDX20/GEMIN3 and GEMIN4. Interacts with RPA2; this DNA damage-dependent interaction recruits PPP4C leading to RPA2 dephosphorylation. As to expression, widely expressed.

It localises to the cytoplasm. It is found in the cytoskeleton. Its subcellular location is the microtubule organizing center. The protein localises to the centrosome. The protein resides in the nucleus. Regulatory subunit of serine/threonine-protein phosphatase 4 (PP4). May regulate the activity of PPP4C at centrosomal microtubule organizing centers. Its interaction with the SMN complex leads to enhance the temporal localization of snRNPs, suggesting a role of PPP4C in maturation of spliceosomal snRNPs. The PPP4C-PPP4R2-PPP4R3A PP4 complex specifically dephosphorylates H2AX phosphorylated on 'Ser-140' (gamma-H2AX) generated during DNA replication and required for DNA double strand break repair. Mediates RPA2 dephosphorylation by recruiting PPP4C to RPA2 in a DNA damage-dependent manner. RPA2 dephosphorylation is required for the efficient RPA2-mediated recruitment of RAD51 to chromatin following double strand breaks, an essential step for DNA repair. The protein is Serine/threonine-protein phosphatase 4 regulatory subunit 2 (PPP4R2) of Homo sapiens (Human).